The following is a 392-amino-acid chain: MSLAHTAAEYMLSDALLPDRRGSRLKGLRLELPLDKMVKFITVGFPLLLMSLAFAQEFSSGSPISCFSPSNFSVRQAAYVDSSCWDSLAHHTQDKAGQYKVKSLWPHKALPYSLLALAVAMYLPVLLWQYVAVPSLSSDLLFIISELDKSYNRSIRLVQHMLQIRQSSSDPHVFWDELEKARKERYFEFPLLERYLECKQRSHWLVATYLLRNALLLLFTSATYLYLGQFHLDVFFQDEFNCFIKTGLLHDETHVPELITCRLTSLSVFQIVSVSSAAIYTILVPVIIYNLTRLCRWDKGLLSIYEMLPAFDLLSRKMLGCPINDLNVILLFLRANISELISFSWLSVLSVLKDTTTQKHNIDTVVDFMTFVAGLEPSKPKHLTQHTYDEHA.

Residues 1-39 (MSLAHTAAEYMLSDALLPDRRGSRLKGLRLELPLDKMVK) are Cytoplasmic-facing. Residues 40–60 (FITVGFPLLLMSLAFAQEFSS) traverse the membrane as a helical segment. Residues 61–113 (GSPISCFSPSNFSVRQAAYVDSSCWDSLAHHTQDKAGQYKVKSLWPHKALPYS) are Extracellular-facing. N71 is a glycosylation site (N-linked (GlcNAc...) asparagine). Residues 114–134 (LLALAVAMYLPVLLWQYVAVP) traverse the membrane as a helical segment. Over 135–215 (SLSSDLLFII…VATYLLRNAL (81 aa)) the chain is Cytoplasmic. Residues 216–236 (LLLFTSATYLYLGQFHLDVFF) traverse the membrane as a helical segment. Topologically, residues 237-267 (QDEFNCFIKTGLLHDETHVPELITCRLTSLS) are extracellular. Residues 268 to 288 (VFQIVSVSSAAIYTILVPVII) form a helical membrane-spanning segment. Residues 289-392 (YNLTRLCRWD…LTQHTYDEHA (104 aa)) are Cytoplasmic-facing.

It belongs to the pannexin family. Homoheptameric. N-glycosylation may play a role in cell surface targeting. In terms of tissue distribution, expressed in skin, cartilage, heart, lung, liver, spleen, thymus and kidney. Not expressed in brain. Expressed in calvarial cells.

Its subcellular location is the cell membrane. It localises to the endoplasmic reticulum membrane. The catalysed reaction is Ca(2+)(in) = Ca(2+)(out). It catalyses the reaction ATP(in) = ATP(out). Its function is as follows. Regulator of osteoblast differentiation by functionning as a Ca(2+) channel in the endoplasmic reticulum which regulates calmodulin (CaM) pathways. Allows ATP release into the extracellular space and activation or purinergic receptors. This Mus musculus (Mouse) protein is Pannexin-3 (Panx3).